A 292-amino-acid chain; its full sequence is Ribosome-inactivating protein saporin-2 (292 aa).

A signal peptide spans 1–24 (MKIYVVATIAWILLQFSAWTTTDA). Glutamate 200 is a catalytic residue.

The protein belongs to the ribosome-inactivating protein family. Type 1 RIP subfamily.

It catalyses the reaction Endohydrolysis of the N-glycosidic bond at one specific adenosine on the 28S rRNA.. Its function is as follows. Ribosome-inactivating protein of type 1, inhibits protein synthesis in animal cells. Useful as immunotoxin for pharmacological applications. The sequence is that of Ribosome-inactivating protein saporin-2 (SAP2) from Saponaria officinalis (Common soapwort).